A 419-amino-acid chain; its full sequence is S-adenosylmethionine synthase (419 aa).

His-15 provides a ligand contact to ATP. A Mg(2+)-binding site is contributed by Asp-17. K(+) is bound at residue Glu-43. 2 residues coordinate L-methionine: Glu-56 and Gln-100. Residues 100 to 110 (QSPDIAQGVDE) form a flexible loop region. ATP contacts are provided by residues 171–173 (DGK), 248–249 (KF), Asp-257, 263–264 (RK), Ala-280, and Lys-284. Residue Asp-257 coordinates L-methionine. Lys-288 is a binding site for L-methionine.

Belongs to the AdoMet synthase family. In terms of assembly, homotetramer; dimer of dimers. Mg(2+) serves as cofactor. The cofactor is K(+).

The protein resides in the cytoplasm. It carries out the reaction L-methionine + ATP + H2O = S-adenosyl-L-methionine + phosphate + diphosphate. It participates in amino-acid biosynthesis; S-adenosyl-L-methionine biosynthesis; S-adenosyl-L-methionine from L-methionine: step 1/1. Catalyzes the formation of S-adenosylmethionine (AdoMet) from methionine and ATP. The overall synthetic reaction is composed of two sequential steps, AdoMet formation and the subsequent tripolyphosphate hydrolysis which occurs prior to release of AdoMet from the enzyme. The chain is S-adenosylmethionine synthase from Parasynechococcus marenigrum (strain WH8102).